We begin with the raw amino-acid sequence, 256 residues long: Imidazole glycerol phosphate synthase subunit HisF (256 aa).

Active-site residues include D12 and D131.

Belongs to the HisA/HisF family. In terms of assembly, heterodimer of HisH and HisF.

Its subcellular location is the cytoplasm. It carries out the reaction 5-[(5-phospho-1-deoxy-D-ribulos-1-ylimino)methylamino]-1-(5-phospho-beta-D-ribosyl)imidazole-4-carboxamide + L-glutamine = D-erythro-1-(imidazol-4-yl)glycerol 3-phosphate + 5-amino-1-(5-phospho-beta-D-ribosyl)imidazole-4-carboxamide + L-glutamate + H(+). It participates in amino-acid biosynthesis; L-histidine biosynthesis; L-histidine from 5-phospho-alpha-D-ribose 1-diphosphate: step 5/9. In terms of biological role, IGPS catalyzes the conversion of PRFAR and glutamine to IGP, AICAR and glutamate. The HisF subunit catalyzes the cyclization activity that produces IGP and AICAR from PRFAR using the ammonia provided by the HisH subunit. This Micrococcus luteus (strain ATCC 4698 / DSM 20030 / JCM 1464 / CCM 169 / CCUG 5858 / IAM 1056 / NBRC 3333 / NCIMB 9278 / NCTC 2665 / VKM Ac-2230) (Micrococcus lysodeikticus) protein is Imidazole glycerol phosphate synthase subunit HisF.